The following is a 552-amino-acid chain: Protein FAM234A (552 aa).

Positions 1-40 (MMDDKDLEAEIHPLKNEDKKSQENLGNLPKTEDNLKNKPV) are disordered. The Cytoplasmic portion of the chain corresponds to 1–49 (MMDDKDLEAEIHPLKNEDKKSQENLGNLPKTEDNLKNKPVPSRLSRCRT). Residues 8-22 (EAEIHPLKNEDKKSQ) are compositionally biased toward basic and acidic residues. A Phosphoserine modification is found at Ser-21. The chain crosses the membrane as a helical; Signal-anchor for type II membrane protein span at residues 50 to 70 (VAFFLSLFICLFVVFVLSFII). Over 71 to 552 (PCPDRPSSED…FSRLRYRSEV (482 aa)) the chain is Extracellular. Residues Asn-116, Asn-119, Asn-314, and Asn-473 are each glycosylated (N-linked (GlcNAc...) asparagine).

The protein belongs to the FAM234 family.

It is found in the membrane. This is Protein FAM234A (Fam234a) from Rattus norvegicus (Rat).